The chain runs to 286 residues: MKMNPDDIRELRDRTGLGLSDCKKALEECDGDIKKAVDKLRTIGLAKADKKSDRVASDGLVAMCLTENCGVLIELNCETDFVARNEKFIELVLNLASIAHQERCTSVDELKNAKYESIGTVQEAIMNGTSVLGEKLELSKLCYLEAKDGVIAGYVHGDVCGLGKIGALIALQSSGDKAKLQEIGKQIAMHVVAMKPEALSIDDLDQMKLNNERSIIEEQVRSLNKPEEVAKKIVDGRMAKYYEEVVLLEQKFIKDDKMKISDFIKSSELSAVKLSNYELLVLGDAD.

Positions 79–82 (TDFV) are involved in Mg(2+) ion dislocation from EF-Tu.

The protein belongs to the EF-Ts family.

Its subcellular location is the cytoplasm. Its function is as follows. Associates with the EF-Tu.GDP complex and induces the exchange of GDP to GTP. It remains bound to the aminoacyl-tRNA.EF-Tu.GTP complex up to the GTP hydrolysis stage on the ribosome. The chain is Elongation factor Ts from Wolbachia pipientis wMel.